We begin with the raw amino-acid sequence, 154 residues long: Deoxyuridine 5'-triphosphate nucleotidohydrolase (154 aa).

Residues 64–66 (RSG), N77, 81–83 (TID), and K91 contribute to the substrate site.

The protein belongs to the dUTPase family. As to quaternary structure, homotrimer. Mg(2+) serves as cofactor.

It carries out the reaction dUTP + H2O = dUMP + diphosphate + H(+). It functions in the pathway pyrimidine metabolism; dUMP biosynthesis; dUMP from dCTP (dUTP route): step 2/2. This enzyme is involved in nucleotide metabolism: it produces dUMP, the immediate precursor of thymidine nucleotides and it decreases the intracellular concentration of dUTP so that uracil cannot be incorporated into DNA. This chain is Deoxyuridine 5'-triphosphate nucleotidohydrolase, found in Mycobacterium bovis (strain BCG / Pasteur 1173P2).